A 308-amino-acid chain; its full sequence is Oxygen-dependent coproporphyrinogen-III oxidase (308 aa).

Position 92 (Ser92) interacts with substrate. 2 residues coordinate a divalent metal cation: His96 and His106. His106 acts as the Proton donor in catalysis. Residue 108-110 coordinates substrate; that stretch reads NVR. A divalent metal cation-binding residues include His145 and His175. The segment at 240–275 is important for dimerization; the sequence is YVEFNLVWDRGTLFGLQTGGRTESILMSMPPLVRWE. 258-260 serves as a coordination point for substrate; that stretch reads GGR.

Belongs to the aerobic coproporphyrinogen-III oxidase family. In terms of assembly, homodimer. A divalent metal cation is required as a cofactor.

The protein resides in the cytoplasm. It catalyses the reaction coproporphyrinogen III + O2 + 2 H(+) = protoporphyrinogen IX + 2 CO2 + 2 H2O. It functions in the pathway porphyrin-containing compound metabolism; protoporphyrin-IX biosynthesis; protoporphyrinogen-IX from coproporphyrinogen-III (O2 route): step 1/1. Functionally, involved in the heme biosynthesis. Catalyzes the aerobic oxidative decarboxylation of propionate groups of rings A and B of coproporphyrinogen-III to yield the vinyl groups in protoporphyrinogen-IX. The sequence is that of Oxygen-dependent coproporphyrinogen-III oxidase from Salmonella paratyphi A (strain ATCC 9150 / SARB42).